We begin with the raw amino-acid sequence, 251 residues long: DNA repair protein RecO (251 aa).

The protein belongs to the RecO family.

Involved in DNA repair and RecF pathway recombination. This Streptococcus mutans serotype c (strain ATCC 700610 / UA159) protein is DNA repair protein RecO.